The chain runs to 96 residues: Co-chaperonin GroES (96 aa).

Belongs to the GroES chaperonin family. As to quaternary structure, heptamer of 7 subunits arranged in a ring. Interacts with the chaperonin GroEL.

The protein localises to the cytoplasm. In terms of biological role, together with the chaperonin GroEL, plays an essential role in assisting protein folding. The GroEL-GroES system forms a nano-cage that allows encapsulation of the non-native substrate proteins and provides a physical environment optimized to promote and accelerate protein folding. GroES binds to the apical surface of the GroEL ring, thereby capping the opening of the GroEL channel. In Methylorubrum populi (strain ATCC BAA-705 / NCIMB 13946 / BJ001) (Methylobacterium populi), this protein is Co-chaperonin GroES.